A 60-amino-acid polypeptide reads, in one-letter code: Temporin-CG1 (60 aa).

The N-terminal stretch at 1-22 is a signal peptide; sequence MFTLKKSLLLLFFLATINLSLC. Positions 23 to 43 are cleaved as a propeptide — removed in mature form; sequence EQERNAEEERRDDDERNAEVE.

As to expression, expressed by the skin glands.

The protein resides in the secreted. Its function is as follows. Antimicrobial peptide active against a variety of Gram-positive and some Gram-negative bacterial strains. Has antifungal activity against a slime mold isolate. Has weak hemolytic activity against human erythrocytes. This is Temporin-CG1 from Amolops chunganensis (Chungan torrent frog).